The sequence spans 136 residues: Glutamate mutase sigma subunit (136 aa).

In terms of domain architecture, B12-binding spans 3–136; it reads KKKIVIGVIG…IIDLKKDFKI (134 aa). Adenosylcob(III)alamin contacts are provided by residues 13-17, His-16, and 61-63; these read SDCHT and SSI.

The protein belongs to the methylaspartate mutase GlmS subunit family. In terms of assembly, heterotetramer composed of 2 epsilon subunits (GlmE) and 2 sigma subunits (GlmS). GlmE exists as a homodimer and GlmS as a monomer. Requires adenosylcob(III)alamin as cofactor.

It carries out the reaction (2S,3S)-3-methyl-L-aspartate = L-glutamate. It participates in amino-acid degradation; L-glutamate degradation via mesaconate pathway; acetate and pyruvate from L-glutamate: step 1/4. In terms of biological role, catalyzes the carbon skeleton rearrangement of L-glutamate to L-threo-3-methylaspartate ((2S,3S)-3-methylaspartate). The chain is Glutamate mutase sigma subunit from Fusobacterium nucleatum subsp. nucleatum (strain ATCC 25586 / DSM 15643 / BCRC 10681 / CIP 101130 / JCM 8532 / KCTC 2640 / LMG 13131 / VPI 4355).